We begin with the raw amino-acid sequence, 201 residues long: FMN-dependent NADH:quinone oxidoreductase (201 aa).

FMN contacts are provided by residues Ser-10, Ser-16–Ser-18, Met-96–Phe-99, and Ser-140–Gly-143.

This sequence belongs to the azoreductase type 1 family. Homodimer. FMN serves as cofactor.

The catalysed reaction is 2 a quinone + NADH + H(+) = 2 a 1,4-benzosemiquinone + NAD(+). It carries out the reaction N,N-dimethyl-1,4-phenylenediamine + anthranilate + 2 NAD(+) = 2-(4-dimethylaminophenyl)diazenylbenzoate + 2 NADH + 2 H(+). Quinone reductase that provides resistance to thiol-specific stress caused by electrophilic quinones. Functionally, also exhibits azoreductase activity. Catalyzes the reductive cleavage of the azo bond in aromatic azo compounds to the corresponding amines. The chain is FMN-dependent NADH:quinone oxidoreductase from Citrobacter koseri (strain ATCC BAA-895 / CDC 4225-83 / SGSC4696).